The sequence spans 232 residues: Large ribosomal subunit protein uL1 (232 aa).

It belongs to the universal ribosomal protein uL1 family. In terms of assembly, part of the 50S ribosomal subunit.

Binds directly to 23S rRNA. The L1 stalk is quite mobile in the ribosome, and is involved in E site tRNA release. Its function is as follows. Protein L1 is also a translational repressor protein, it controls the translation of the L11 operon by binding to its mRNA. This is Large ribosomal subunit protein uL1 from Ruegeria sp. (strain TM1040) (Silicibacter sp.).